Reading from the N-terminus, the 391-residue chain is Digeranylgeranylglycerophospholipid reductase (391 aa).

The FAD site is built by glycine 18, glutamate 37, cysteine 48, alanine 49, alanine 51, arginine 98, alanine 122, aspartate 279, glycine 291, and isoleucine 292.

Belongs to the geranylgeranyl reductase family. DGGGPL reductase subfamily. FAD serves as cofactor.

It catalyses the reaction a 2,3-bis-O-phytanyl-sn-glycerol 1-phospholipid + 8 A = a 2,3-bis-O-(geranylgeranyl)-sn-glycerol 1-phospholipid + 8 AH2. The enzyme catalyses 2,3-bis-O-(phytanyl)-sn-glycerol 1-phosphate + 8 A = 2,3-bis-O-(geranylgeranyl)-sn-glycerol 1-phosphate + 8 AH2. The catalysed reaction is CDP-2,3-bis-O-(geranylgeranyl)-sn-glycerol + 8 AH2 = CDP-2,3-bis-O-(phytanyl)-sn-glycerol + 8 A. It carries out the reaction archaetidylserine + 8 AH2 = 2,3-bis-O-phytanyl-sn-glycero-3-phospho-L-serine + 8 A. It functions in the pathway membrane lipid metabolism; glycerophospholipid metabolism. Functionally, is involved in the reduction of 2,3-digeranylgeranylglycerophospholipids (unsaturated archaeols) into 2,3-diphytanylglycerophospholipids (saturated archaeols) in the biosynthesis of archaeal membrane lipids. Catalyzes the formation of archaetidic acid (2,3-di-O-phytanyl-sn-glyceryl phosphate) from 2,3-di-O-geranylgeranylglyceryl phosphate (DGGGP) via the hydrogenation of each double bond of the isoprenoid chains. Is also probably able to reduce double bonds of geranyl groups in CDP-2,3-bis-O-(geranylgeranyl)-sn-glycerol and archaetidylserine, thus acting at various stages in the biosynthesis of archaeal membrane lipids. This Methanocaldococcus jannaschii (strain ATCC 43067 / DSM 2661 / JAL-1 / JCM 10045 / NBRC 100440) (Methanococcus jannaschii) protein is Digeranylgeranylglycerophospholipid reductase.